The chain runs to 2713 residues: Histone-lysine N-methyltransferase 2B (2713 aa).

A compositionally biased stretch (gly residues) spans 1 to 11; the sequence is MAAAAGGGSCP. Disordered regions lie at residues 1 to 65, 82 to 524, and 542 to 783; these read MAAA…GEDT, RLWA…PTVV, and VSAR…ARVA. A2 is modified (N-acetylalanine). The segment covering 12 to 24 has biased composition (low complexity); sequence GPGSARGRFPGRP. The Menin-binding motif (MBM) signature appears at 17–36; that stretch reads RGRFPGRPRGSGGGGGRGGR. 2 stretches are compositionally biased toward gly residues: residues 25 to 38 and 49 to 60; these read RGSG…GRGN and RGGGAAGPGGAE. The a.T hook 1 DNA-binding region spans 37–44; it reads GNGAERVR. Positions 109–123 are enriched in acidic residues; that stretch reads PEEESSDGESEEEEF. Positions 110 to 117 form a DNA-binding region, a.T hook 2; that stretch reads EEESSDGE. S113, S114, and S118 each carry phosphoserine. Residues 144 to 158 show a composition bias toward basic residues; sequence QRGRAPRGRGRKHKT. A compositionally biased stretch (basic and acidic residues) spans 340 to 360; sequence PQRKDGDEPERGSCRKKQEQK. Residues 357–365 constitute a DNA-binding region (a.T hook 3); sequence QEQKLEEEE. Acidic residues predominate over residues 361–393; the sequence is LEEEEEEEEKEGEEKEEKDDNEDNNKQEEEEET. The span at 394–412 shows a compositional bias: basic and acidic residues; it reads ERAVAEEEAMLAKEKEEAK. Pro residues predominate over residues 414-460; sequence PSPPLTPPVPSPPPPLPPPSTSPPPPASPLPPPVSPPPPLSPPPYPA. Residues 501–517 are compositionally biased toward low complexity; that stretch reads GTLSPTPNPSTTTGSPL. Basic and acidic residues predominate over residues 555 to 566; sequence RFMDEDPPKPPK. A compositionally biased stretch (pro residues) spans 577 to 605; it reads ATSPPAPQEPVPVSSPPRVPTPPSTPVPL. Over residues 606 to 617 the composition is skewed to basic and acidic residues; the sequence is PEKRRSILREPT. The segment covering 627 to 645 has biased composition (pro residues); sequence LPPPPPAPPPAPSPPPAPA. 3 stretches are compositionally biased toward low complexity: residues 646 to 657, 715 to 728, and 738 to 756; these read TPSRRPLLLRAP, VPVV…EVPP, and QQLQ…LLPQ. Residues 757–774 show a composition bias toward pro residues; the sequence is ALPPQQPQAQPPPSPQHT. A Glycyl lysine isopeptide (Lys-Gly) (interchain with G-Cter in SUMO2) cross-link involves residue K810. Phosphoserine occurs at positions 826, 849, and 866. Disordered regions lie at residues 831-872 and 899-964; these read TEEA…QGPR and SALP…HHGK. Positions 841–862 are enriched in basic and acidic residues; the sequence is TPDRGCVRSEDESMEAKRDRAS. Positions 912–922 are enriched in low complexity; the sequence is EDTSSASETES. S941 carries the post-translational modification Phosphoserine. Residues 953–964 are compositionally biased toward basic residues; the sequence is TPRRSLPSHHGK. A CXXC-type zinc finger spans residues 964-1011; that stretch reads KKMRMARCGHCRGCLRVQDCGSCVNCLDKPKFGGPNTKKQCCVYRKCD. C971, C974, C977, C983, C986, C989, C1005, and C1010 together coordinate Zn(2+). Disordered stretches follow at residues 1032-1076 and 1088-1138; these read LLPW…DSLL and QRPS…LQPV. Phosphoserine is present on residues S1037, S1040, S1098, and S1101. A Glycyl lysine isopeptide (Lys-Gly) (interchain with G-Cter in SUMO2) cross-link involves residue K1142. PHD-type zinc fingers lie at residues 1207-1258, 1255-1309, and 1341-1402; these read PMVC…CKFC, CKFC…CVRC, and GNYC…CAGA. The Bromo domain occupies 1410–1510; the sequence is ALSGALQGGL…GLLLKLLESA (101 aa). The tract at residues 1550 to 1572 is disordered; that stretch reads RQQESETPESGQPPGDPSAAFQS. A C2HC pre-PHD-type zinc finger spans residues 1584 to 1624; the sequence is PRQCALCLKYGDADSKEAGRLLYIGQNEWTHVNCAIWSAEV. A PHD-type 4 zinc finger spans residues 1645 to 1692; it reads MRCELCLKPGATVGCCLSSCLSNFHFMCARASYCIFQDDKKVFCQKHT. An FYR N-terminal domain is found at 1733–1789; that stretch reads VINVLIGSIRINSLGTLSDLSDCEGRLFPIGYQCSRLYWSTVDARRRCWYRCRILEY. Residues 1808–1821 are compositionally biased toward polar residues; that stretch reads QTIVHSPTPSSDTD. Disordered regions lie at residues 1808–1973, 2056–2104, 2116–2160, 2279–2356, and 2382–2408; these read QTIV…GPDF, QLDG…PPED, NLGG…RTFA, VSTF…RCPL, and YSAG…PKRV. Low complexity-rich tracts occupy residues 1872-1890 and 1923-1933; these read PLGG…PSSL and RRTSSPLRTSP. A phosphoserine mark is found at S1926 and S1932. Positions 1939–1950 are enriched in polar residues; sequence LSTSVTALTPTS. The span at 2058-2068 shows a compositional bias: acidic residues; the sequence is DGVDDGTDSEA. Phosphothreonine occurs at positions 2064 and 2079. The span at 2084 to 2093 shows a compositional bias: gly residues; it reads PGVGRGGVLG. Polar residues predominate over residues 2140-2153; sequence NGSQPPQSLSTSPA. 2 positions are modified to phosphoserine: S2286 and S2346. One can recognise an FYR C-terminal domain in the interval 2409–2490; that stretch reads GPHLRFEISS…QRCQHYKFRY (82 aa). A WDR5 interaction motif (WIN) motif is present at residues 2506 to 2511; the sequence is GAARAE. The SET domain maps to 2573–2689; the sequence is EAVGVYRSAI…RGEELTYDYK (117 aa). Residues H2583, R2585, Y2627, and 2650 to 2651 each bind S-adenosyl-L-methionine; that span reads NH. Zn(2+) is bound by residues C2653 and C2701. A Post-SET domain is found at 2697-2713; sequence NKLPCNCGAKRCRRFLN. Residue N2702 coordinates S-adenosyl-L-methionine. The Zn(2+) site is built by C2703 and C2708.

Belongs to the class V-like SAM-binding methyltransferase superfamily. Histone-lysine methyltransferase family. TRX/MLL subfamily. As to quaternary structure, component of the menin-associated histone methyltransferase complex, at least composed of KMT2B/MLL4, ASH2L, RBBP5, WDR5, DPY30, MEN1; the complex interacts with POLR2A and POLR2B via MEN1. Interacts with NFE2. Interacts with KDM6B. Interacts (via WIN motif) with WDR5. Interacts (via MBM motif) with MEN1.

Its subcellular location is the nucleus. The enzyme catalyses L-lysyl(4)-[histone H3] + S-adenosyl-L-methionine = N(6)-methyl-L-lysyl(4)-[histone H3] + S-adenosyl-L-homocysteine + H(+). The catalysed reaction is N(6)-methyl-L-lysyl(4)-[histone H3] + S-adenosyl-L-methionine = N(6),N(6)-dimethyl-L-lysyl(4)-[histone H3] + S-adenosyl-L-homocysteine + H(+). Histone methyltransferase that catalyzes methyl group transfer from S-adenosyl-L-methionine to the epsilon-amino group of 'Lys-4' of histone H3 (H3K4) via a non-processive mechanism. Part of chromatin remodeling machinery predominantly forms H3K4me1 and H3K4me2 methylation marks at active chromatin sites where transcription and DNA repair take place. Likely plays a redundant role with KMT2C in enriching H3K4me1 marks on primed and active enhancer elements. Plays a central role in beta-globin locus transcription regulation by being recruited by NFE2. Plays an important role in controlling bulk H3K4me during oocyte growth and preimplantation development. Required during the transcriptionally active period of oocyte growth for the establishment and/or maintenance of bulk H3K4 trimethylation (H3K4me3), global transcriptional silencing that preceeds resumption of meiosis, oocyte survival and normal zygotic genome activation. This chain is Histone-lysine N-methyltransferase 2B (Kmt2b), found in Mus musculus (Mouse).